We begin with the raw amino-acid sequence, 145 residues long: Histone H2B.10 (145 aa).

Residues 1–15 (MAKADKKPAEKKPAE) are compositionally biased toward basic and acidic residues. A disordered region spans residues 1 to 53 (MAKADKKPAEKKPAEKTPAAEPAAAAEKKPKAGKKLPKEPAGAGDKKKKRSKK). At lysine 3 the chain carries N6-methyllysine. An N6-acetyllysine mark is found at lysine 6 and lysine 11. Lysine 12 carries the N6,N6-dimethyllysine modification. An N6-acetyllysine mark is found at lysine 16, lysine 28, and lysine 34. A compositionally biased stretch (low complexity) spans 16 to 25 (KTPAAEPAAA). An N6-acetyllysine; partial modification is found at lysine 35. Lysine 141 participates in a covalent cross-link: Glycyl lysine isopeptide (Lys-Gly) (interchain with G-Cter in ubiquitin).

It belongs to the histone H2B family. The nucleosome is a histone octamer containing two molecules each of H2A, H2B, H3 and H4 assembled in one H3-H4 heterotetramer and two H2A-H2B heterodimers. The octamer wraps approximately 147 bp of DNA. Interacts with ORTH2. Post-translationally, can be acetylated to form H2BK5ac, H2BK10ac, H2BK15ac, H2BK27ac, H2BK33ac and H2BK34ac. Dimethylated to form H2BK11me2. In terms of processing, monoubiquitinated by BRE1 to form H2BK143ub1 and deubiquitinated by UBP26. Required for heterochromatic histone H3 di- and trimethylation at H3K4me. May give a specific tag for epigenetic transcriptional activation.

It is found in the nucleus. The protein resides in the chromosome. Core component of nucleosome. Nucleosomes wrap and compact DNA into chromatin, limiting DNA accessibility to the cellular machineries which require DNA as a template. Histones thereby play a central role in transcription regulation, DNA repair, DNA replication and chromosomal stability. DNA accessibility is regulated via a complex set of post-translational modifications of histones, also called histone code, and nucleosome remodeling. The protein is Histone H2B.10 of Arabidopsis thaliana (Mouse-ear cress).